A 1533-amino-acid polypeptide reads, in one-letter code: DNA topoisomerase 2-alpha (1533 aa).

Residue M1 is modified to N-acetylmethionine. The interval 1–22 (MEVSPLQPVNENMQVNKTKKNE) is disordered. S4 is subject to Phosphoserine. The segment covering 7-16 (QPVNENMQVN) has biased composition (polar residues). K17 participates in a covalent cross-link: Glycyl lysine isopeptide (Lys-Gly) (interchain with G-Cter in SUMO2). ATP-binding positions include N91, N120, and 148–150 (SSN). Residues K156 and K157 each participate in a glycyl lysine isopeptide (Lys-Gly) (interchain with G-Cter in SUMO2) cross-link. An ATP-binding site is contributed by 161–168 (GRNGYGAK). A Glycyl lysine isopeptide (Lys-Gly) (interchain with G-Cter in SUMO2) cross-link involves residue K261. T282 bears the Phosphothreonine mark. Positions 342–344 (KKK) are interaction with DNA. Residue K352 forms a Glycyl lysine isopeptide (Lys-Gly) (interchain with G-Cter in SUMO2) linkage. 376 to 378 (QTK) contributes to the ATP binding site. Residues K386, K397, K416, K418, K425, and K440 each participate in a glycyl lysine isopeptide (Lys-Gly) (interchain with G-Cter in SUMO2) cross-link. The region spanning 455–572 (CTLILTEGDS…SLLRHRFLEE (118 aa)) is the Toprim domain. Residue E461 participates in Mg(2+) binding. Glycyl lysine isopeptide (Lys-Gly) (interchain with G-Cter in SUMO2) cross-links involve residues K466, K480, and K529. The Mg(2+) site is built by D541 and D543. Glycyl lysine isopeptide (Lys-Gly) (interchain with G-Cter in SUMO2) cross-links involve residues K584, K599, K614, K622, K625, K632, K639, K655, K662, and K676. Residues 715–1171 (IPSMVDGLKP…SPSDLWKEDL (457 aa)) enclose the Topo IIA-type catalytic domain. Y805 serves as the catalytic O-(5'-phospho-DNA)-tyrosine intermediate. Positions 990 to 999 (KLQTSLTCNS) are interaction with DNA. Residue K1075 forms a Glycyl lysine isopeptide (Lys-Gly) (interchain with G-Cter in SUMO2) linkage. Disordered stretches follow at residues 1090-1121 (WKEA…VADS) and 1183-1215 (AKEK…PSPC). Acidic residues predominate over residues 1099–1108 (DEEENEESDN). S1106 is modified (phosphoserine; by CK1). Glycyl lysine isopeptide (Lys-Gly) (interchain with G-Cter in SUMO2) cross-links involve residues K1114, K1196, and K1204. T1205 is subject to Phosphothreonine. S1213 bears the Phosphoserine mark. K1228 participates in a covalent cross-link: Glycyl lysine isopeptide (Lys-Gly) (interchain with G-Cter in SUMO2). A disordered region spans residues 1231 to 1533 (AEKKIKKKIK…LEESDEDDLF (303 aa)). K1240 participates in a covalent cross-link: Glycyl lysine isopeptide (Lys-Gly) (interchain with G-Cter in SUMO1); alternate. K1240 participates in a covalent cross-link: Glycyl lysine isopeptide (Lys-Gly) (interchain with G-Cter in SUMO2); alternate. A Phosphothreonine modification is found at T1244. S1247 bears the Phosphoserine mark. Residues 1256 to 1272 (EGLKQRLEKKQKREPGT) show a composition bias toward basic and acidic residues. Glycyl lysine isopeptide (Lys-Gly) (interchain with G-Cter in SUMO2) cross-links involve residues K1259, K1276, K1283, and K1286. Phosphoserine occurs at positions 1295, 1297, 1299, and 1302. Residue T1327 is modified to Phosphothreonine. Residues S1332 and S1337 each carry the phosphoserine modification. T1343 bears the Phosphothreonine mark. S1351 and S1354 each carry phosphoserine. Over residues 1360–1371 (TSPKHTNKEPKP) the composition is skewed to basic and acidic residues. Residues K1363, K1367, and K1373 each participate in a glycyl lysine isopeptide (Lys-Gly) (interchain with G-Cter in SUMO2) cross-link. Phosphoserine occurs at positions 1374 and 1377. K1387 is covalently cross-linked (Glycyl lysine isopeptide (Lys-Gly) (interchain with G-Cter in SUMO2)). S1393 and S1395 each carry phosphoserine. A compositionally biased stretch (low complexity) spans 1409 to 1433 (KPVSKKNVTVKKTAAKSQSSTSTTG). A Glycyl lysine isopeptide (Lys-Gly) (interchain with G-Cter in SUMO2); alternate cross-link involves residue K1424. N6-acetyllysine; alternate is present on K1424. The segment at 1435 to 1441 (KKRAAPK) is interaction with PLSCR1. A compositionally biased stretch (basic and acidic residues) spans 1443-1455 (AKKDPDLDSDVSK). K1444 is covalently cross-linked (Glycyl lysine isopeptide (Lys-Gly) (interchain with G-Cter in SUMO2); alternate). The residue at position 1444 (K1444) is an N6-acetyllysine; alternate. S1451 is subject to Phosphoserine. Residues K1456 and K1461 each participate in a glycyl lysine isopeptide (Lys-Gly) (interchain with G-Cter in SUMO2) cross-link. The residue at position 1471 (S1471) is a Phosphoserine. Residue T1472 is modified to Phosphothreonine. Phosphoserine occurs at positions 1473, 1476, and 1478. Residues K1486 and K1494 each participate in a glycyl lysine isopeptide (Lys-Gly) (interchain with G-Cter in SUMO2) cross-link. Residues 1493–1504 (PKGESDDFHLDL) show a composition bias toward basic and acidic residues. Phosphoserine is present on residues S1497 and S1527.

The protein belongs to the type II topoisomerase family. In terms of assembly, homodimer. Interacts with COPS5. Interacts with RECQL5; this stimulates DNA decatenation. Interacts with SETMAR; stimulates the topoisomerase activity. Interacts with DHX9; this interaction occurs in a E2 enzyme UBE2I- and RNA-dependent manner, negatively regulates DHX9-mediated double-stranded DNA and RNA duplex helicase activity and stimulates TOP2A-mediated supercoiled DNA relaxation activity. Interacts with HNRNPU (via C-terminus); this interaction protects the topoisomerase TOP2A from degradation and positively regulates the relaxation of supercoiled DNA in a RNA-dependent manner. Interacts with MCM3AP. Interacts with ERCC6. Interacts with PLSCR1. Interacts with GCNA; this interaction allows the resolution of topoisomerase II (TOP2A) DNA-protein cross-links. Interacts with POL1RA/RPA1 (via dock II) and UBTF in the context of Pol I complex; may assist Pol I transcription initiation by releasing supercoils occurring during DNA unwinding. Interacts with TPRN; TPRN interacts with a number of DNA damage response proteins, is recruited to sites of DNA damage and may play a role in DNA damage repair. Mg(2+) serves as cofactor. The cofactor is Mn(2+). Ca(2+) is required as a cofactor. Phosphorylation has no effect on catalytic activity. However, phosphorylation at Ser-1106 by CSNK1D/CK1 promotes DNA cleavable complex formation.

The protein localises to the cytoplasm. It localises to the nucleus. The protein resides in the nucleoplasm. It is found in the nucleolus. The catalysed reaction is ATP-dependent breakage, passage and rejoining of double-stranded DNA.. Its function is as follows. Key decatenating enzyme that alters DNA topology by binding to two double-stranded DNA molecules, generating a double-stranded break in one of the strands, passing the intact strand through the broken strand, and religating the broken strand. May play a role in regulating the period length of BMAL1 transcriptional oscillation. The sequence is that of DNA topoisomerase 2-alpha (TOP2A) from Sus scrofa (Pig).